The following is a 44-amino-acid chain: Large ribosomal subunit protein bL34 (44 aa).

It belongs to the bacterial ribosomal protein bL34 family.

This Buchnera aphidicola subsp. Cinara cedri (strain Cc) protein is Large ribosomal subunit protein bL34.